A 243-amino-acid chain; its full sequence is MAELLLGVNIDHIATLRNARGTAYPDPVQAAFIAEQAGADGITVHLREDRRHITDRDVRILRQTLDTRMNLEMAVTEEMLAIAVETKPHFCCLVPEKRQEVTTEGGLDVAGQREKMRDACKRLTDAGIQVSLFIDADEEQIKAAAEVGAPFIEIHTGCYADAKTDAEQAQELVRIAKAATFAASLGLKVNAGHGLTYHNVKAIAAIPEMHELNIGHAIIGRAVMTGLKDAVAEMKRLMLEARG.

3-amino-2-oxopropyl phosphate is bound at residue N9. A 1-deoxy-D-xylulose 5-phosphate-binding site is contributed by 11–12 (DH). R20 serves as a coordination point for 3-amino-2-oxopropyl phosphate. H45 (proton acceptor) is an active-site residue. 1-deoxy-D-xylulose 5-phosphate contacts are provided by R47 and H52. E72 serves as the catalytic Proton acceptor. T102 contributes to the 1-deoxy-D-xylulose 5-phosphate binding site. The Proton donor role is filled by H193. Residues G194 and 215–216 (GH) contribute to the 3-amino-2-oxopropyl phosphate site.

Belongs to the PNP synthase family. Homooctamer; tetramer of dimers.

The protein localises to the cytoplasm. It catalyses the reaction 3-amino-2-oxopropyl phosphate + 1-deoxy-D-xylulose 5-phosphate = pyridoxine 5'-phosphate + phosphate + 2 H2O + H(+). The protein operates within cofactor biosynthesis; pyridoxine 5'-phosphate biosynthesis; pyridoxine 5'-phosphate from D-erythrose 4-phosphate: step 5/5. Its function is as follows. Catalyzes the complicated ring closure reaction between the two acyclic compounds 1-deoxy-D-xylulose-5-phosphate (DXP) and 3-amino-2-oxopropyl phosphate (1-amino-acetone-3-phosphate or AAP) to form pyridoxine 5'-phosphate (PNP) and inorganic phosphate. This is Pyridoxine 5'-phosphate synthase from Shigella boydii serotype 4 (strain Sb227).